A 572-amino-acid chain; its full sequence is Arginine--tRNA ligase (572 aa).

The 'HIGH' region motif lies at 122 to 132 (PNLAKEMHVGH).

This sequence belongs to the class-I aminoacyl-tRNA synthetase family. In terms of assembly, monomer.

It localises to the cytoplasm. The catalysed reaction is tRNA(Arg) + L-arginine + ATP = L-arginyl-tRNA(Arg) + AMP + diphosphate. The sequence is that of Arginine--tRNA ligase from Neisseria gonorrhoeae (strain NCCP11945).